Reading from the N-terminus, the 263-residue chain is 3-methyl-2-oxobutanoate hydroxymethyltransferase (263 aa).

Positions 45 and 84 each coordinate Mg(2+). Residues 45–46 (DS), D84, and K112 each bind 3-methyl-2-oxobutanoate. E114 is a binding site for Mg(2+). Residue E181 is the Proton acceptor of the active site.

This sequence belongs to the PanB family. Homodecamer; pentamer of dimers. Mg(2+) is required as a cofactor.

It is found in the cytoplasm. It carries out the reaction 3-methyl-2-oxobutanoate + (6R)-5,10-methylene-5,6,7,8-tetrahydrofolate + H2O = 2-dehydropantoate + (6S)-5,6,7,8-tetrahydrofolate. The protein operates within cofactor biosynthesis; (R)-pantothenate biosynthesis; (R)-pantoate from 3-methyl-2-oxobutanoate: step 1/2. Functionally, catalyzes the reversible reaction in which hydroxymethyl group from 5,10-methylenetetrahydrofolate is transferred onto alpha-ketoisovalerate to form ketopantoate. The chain is 3-methyl-2-oxobutanoate hydroxymethyltransferase from Proteus mirabilis (strain HI4320).